Reading from the N-terminus, the 236-residue chain is Thiamine import ATP-binding protein ThiQ (236 aa).

The 229-residue stretch at 2–230 (LKLEKITYLY…SAAKASVLGI (229 aa)) folds into the ABC transporter domain. 32–39 (GPSGAGKS) contacts ATP.

This sequence belongs to the ABC transporter superfamily. Thiamine importer (TC 3.A.1.19.1) family. As to quaternary structure, the complex is composed of two ATP-binding proteins (ThiQ), two transmembrane proteins (ThiP) and a solute-binding protein (ThiB).

The protein localises to the cell inner membrane. The enzyme catalyses thiamine(out) + ATP + H2O = thiamine(in) + ADP + phosphate + H(+). Functionally, part of the ABC transporter complex ThiBPQ involved in thiamine import. Responsible for energy coupling to the transport system. This chain is Thiamine import ATP-binding protein ThiQ, found in Yersinia pseudotuberculosis serotype I (strain IP32953).